The primary structure comprises 62 residues: Sperm protamine P1 (62 aa).

The interval Met1–Tyr62 is disordered.

The protein belongs to the protamine P1 family. As to expression, testis.

Its subcellular location is the nucleus. The protein localises to the chromosome. In terms of biological role, protamines substitute for histones in the chromatin of sperm during the haploid phase of spermatogenesis. They compact sperm DNA into a highly condensed, stable and inactive complex. This Sarcophilus harrisii (Tasmanian devil) protein is Sperm protamine P1 (PRM1).